Consider the following 203-residue polypeptide: Ras-like protein family member 10A (203 aa).

Residues 1 to 203 (MGGSLRVAVL…ALHPARCSLM (203 aa)) form a small GTPase-like region. 11 to 18 (GAPGVGKT) contacts GTP. Positions 33–42 (HRPTDSPCLY) match the Effector region motif. GTP is bound by residues 59–62 (DGDV) and 129–132 (NKRD). Cys-200 carries the cysteine methyl ester modification. Residue Cys-200 is the site of S-farnesyl cysteine attachment. A propeptide spans 201–203 (SLM) (removed in mature form).

The protein belongs to the small GTPase superfamily. Ras family. In terms of processing, isoprenylation is essential for nucleolar localization, and the proliferation-inhibiting activity of RASL10A.

Its subcellular location is the cell membrane. The protein localises to the nucleus. It localises to the nucleolus. It carries out the reaction GTP + H2O = GDP + phosphate + H(+). Potent inhibitor of cellular proliferation. The protein is Ras-like protein family member 10A (Rasl10a) of Mus musculus (Mouse).